We begin with the raw amino-acid sequence, 449 residues long: Xaa-Pro dipeptidase (449 aa).

Aspartate 246, aspartate 257, histidine 345, glutamate 390, and glutamate 429 together coordinate Mn(2+).

The protein belongs to the peptidase M24B family. Bacterial-type prolidase subfamily. The cofactor is Mn(2+).

It catalyses the reaction Xaa-L-Pro dipeptide + H2O = an L-alpha-amino acid + L-proline. In terms of biological role, splits dipeptides with a prolyl residue in the C-terminal position. This is Xaa-Pro dipeptidase from Yersinia enterocolitica serotype O:8 / biotype 1B (strain NCTC 13174 / 8081).